Reading from the N-terminus, the 174-residue chain is Probable inosine/xanthosine triphosphatase (174 aa).

A Mg(2+)-binding site is contributed by Asp63.

It belongs to the YjjX NTPase family. Homodimer. The cofactor is Mg(2+). Requires Mn(2+) as cofactor.

It carries out the reaction XTP + H2O = XDP + phosphate + H(+). The catalysed reaction is ITP + H2O = IDP + phosphate + H(+). Its function is as follows. Phosphatase that hydrolyzes non-canonical purine nucleotides such as XTP and ITP to their respective diphosphate derivatives. Probably excludes non-canonical purines from DNA/RNA precursor pool, thus preventing their incorporation into DNA/RNA and avoiding chromosomal lesions. This chain is Probable inosine/xanthosine triphosphatase, found in Methanocella arvoryzae (strain DSM 22066 / NBRC 105507 / MRE50).